Here is a 446-residue protein sequence, read N- to C-terminus: GTPase Der (446 aa).

2 EngA-type G domains span residues 3-168 (PVIA…YAGQ) and 181-354 (IKIA…KAAM). GTP contacts are provided by residues 9 to 16 (GRPNVGKS), 57 to 61 (DTGGF), 120 to 123 (NKAE), 187 to 194 (GRPNVGKS), 234 to 238 (DTAGL), and 299 to 302 (NKWD). Residues 355-439 (SKLPTPKLTR…PLRIEFRSST (85 aa)) form the KH-like domain.

Belongs to the TRAFAC class TrmE-Era-EngA-EngB-Septin-like GTPase superfamily. EngA (Der) GTPase family. In terms of assembly, associates with the 50S ribosomal subunit.

Its function is as follows. GTPase that plays an essential role in the late steps of ribosome biogenesis. This Paraburkholderia phymatum (strain DSM 17167 / CIP 108236 / LMG 21445 / STM815) (Burkholderia phymatum) protein is GTPase Der.